The sequence spans 194 residues: Histone H1.0-A (194 aa).

Disordered regions lie at residues 1–29 (MTEN…YSDM) and 96–194 (ADEV…GRKK). Residues 22 to 95 (DHPKYSDMIL…GASGSFRLAK (74 aa)) enclose the H15 domain. Basic residues-rich tracts occupy residues 102–164 (PAKK…KTVR) and 172–194 (KAKK…GRKK).

Belongs to the histone H1/H5 family.

It localises to the nucleus. The protein localises to the chromosome. Histones H1 are necessary for the condensation of nucleosome chains into higher-order structures. The histones H1.0 are found in cells that are in terminal stages of differentiation or that have low rates of cell division. The polypeptide is Histone H1.0-A (h1-0-a) (Xenopus laevis (African clawed frog)).